Reading from the N-terminus, the 180-residue chain is Ribulose bisphosphate carboxylase small subunit, chloroplastic (180 aa).

Residues 1–56 (MASSIMSSAAVATRSNGAQASMVAPFTGLKSNASFPVSRKTNLDITSIASNGGRVR) constitute a chloroplast transit peptide.

The protein belongs to the RuBisCO small chain family. Heterohexadecamer of 8 large and 8 small subunits.

It is found in the plastid. The protein localises to the chloroplast. RuBisCO catalyzes two reactions: the carboxylation of D-ribulose 1,5-bisphosphate, the primary event in carbon dioxide fixation, as well as the oxidative fragmentation of the pentose substrate. Both reactions occur simultaneously and in competition at the same active site. Although the small subunit is not catalytic it is essential for maximal activity. The sequence is that of Ribulose bisphosphate carboxylase small subunit, chloroplastic from Stellaria longipes (Longstalk starwort).